The following is a 392-amino-acid chain: MKIIMCIFGLAALAMAGETDLQKILRESNDQFTAQMFSEVVKANPGQNVVLSAFSVLPPLGQLALASVGESHDELLRALALPNDNVTKDVFADLNRGVRAVKGVDLKMASKIYVAKGLELNDDFAAVSRDVFGSEVQNVDFVKSVEAAGAINKWVEDQTNNRIKNLVDPDALDETTRSVLVNAIYFKGSWKDKFVKERTMDRDFHVSKDKTIKVPTMIGKKDVRYADVPELDAKMIEMSYEGDQASMIIILPNQVDGITALEQKLKDPKALSRAEERLYNTEVEIYLPKFKIETTTDLKEVLSNMNIKKLFTPGAARLENLLKTKESLYVDAAIQKAFIEVNEEGAEAAAANAFGIVPASLILYPEVHIDRPFYFELKIDGIPMFNGKVIEP.

The N-terminal stretch at 1–16 (MKIIMCIFGLAALAMA) is a signal peptide. An N-linked (GlcNAc...) asparagine glycan is attached at Asn-85.

Belongs to the serpin family. Hemolymph.

It is found in the secreted. It localises to the extracellular space. Its function is as follows. Inhibits elastase. This Manduca sexta (Tobacco hawkmoth) protein is Alaserpin.